A 259-amino-acid chain; its full sequence is Protein POLYCHOME (259 aa).

The tract at residues 236–259 (KMKSTPSAKRAEREKRVRTLMSMR) is disordered.

As to quaternary structure, interacts with APC/C activators such as APC5, FZR2, FZR3, CDC20.1 and CDC20.5. As to expression, expressed mainly in actively dividing cells (e.g. central cylinder of the root tip, young leaves and vascular tissues).

The protein localises to the nucleus. Negative regulator of the anaphase-promoting complex/cyclosome (APC/C) ubiquitin ligase required for proper mitotic progression and cell fate determination; inhibits premature cell differentiation. Prevents DNA endoreplication by promoting the maintenance of the mitotic state by preferentially inhibiting APC/C(FZR) and triggering cyclins accumulation (e.g. CYCB1-1, CYCB1-2 and CYCA2-3) in a temporal manner. Required for megagametophyte and endosperm development. Counteracts the activity of CCS52A1 thus inhibiting the turnover of CYCA2-3. Confers immunity to bacterial pathogens (e.g. Pseudomonas syringae pv. tomato DC3000), which is associated with increased expression of disease resistance (R) genes. This is Protein POLYCHOME (PYM) from Arabidopsis thaliana (Mouse-ear cress).